We begin with the raw amino-acid sequence, 494 residues long: Ketol-acid reductoisomerase (NADP(+)) (494 aa).

Positions 14–208 (LDQLGRCRFM…GGHRAGCLES (195 aa)) constitute a KARI N-terminal Rossmann domain. Residues 45–48 (CGAQ), R68, R76, S78, and 108–110 (DKQ) each bind NADP(+). H132 is a catalytic residue. Residue G158 coordinates NADP(+). 2 KARI C-terminal knotted domains span residues 209–344 (SFVA…NYPS) and 345–487 (TDVE…MTDM). Residues D217, E221, E389, and E393 each contribute to the Mg(2+) site. S414 provides a ligand contact to substrate.

It belongs to the ketol-acid reductoisomerase family. Requires Mg(2+) as cofactor.

The enzyme catalyses (2R)-2,3-dihydroxy-3-methylbutanoate + NADP(+) = (2S)-2-acetolactate + NADPH + H(+). It carries out the reaction (2R,3R)-2,3-dihydroxy-3-methylpentanoate + NADP(+) = (S)-2-ethyl-2-hydroxy-3-oxobutanoate + NADPH + H(+). Its pathway is amino-acid biosynthesis; L-isoleucine biosynthesis; L-isoleucine from 2-oxobutanoate: step 2/4. It functions in the pathway amino-acid biosynthesis; L-valine biosynthesis; L-valine from pyruvate: step 2/4. Involved in the biosynthesis of branched-chain amino acids (BCAA). Catalyzes an alkyl-migration followed by a ketol-acid reduction of (S)-2-acetolactate (S2AL) to yield (R)-2,3-dihydroxy-isovalerate. In the isomerase reaction, S2AL is rearranged via a Mg-dependent methyl migration to produce 3-hydroxy-3-methyl-2-ketobutyrate (HMKB). In the reductase reaction, this 2-ketoacid undergoes a metal-dependent reduction by NADPH to yield (R)-2,3-dihydroxy-isovalerate. The polypeptide is Ketol-acid reductoisomerase (NADP(+)) (Vibrio vulnificus (strain CMCP6)).